The primary structure comprises 397 residues: Elongation factor Tu (397 aa).

In terms of domain architecture, tr-type G spans 10 to 207; the sequence is LPHVNVGTIG…TLDAYIPEPV (198 aa). Residues 19-26 form a G1 region; that stretch reads GHVDHGKT. 19–26 lines the GTP pocket; that stretch reads GHVDHGKT. Residue Thr-26 coordinates Mg(2+). The tract at residues 60–64 is G2; the sequence is GITIN. The tract at residues 81 to 84 is G3; that stretch reads DCPG. Residues 81–85 and 136–139 contribute to the GTP site; these read DCPGH and NKAD. Residues 136–139 form a G4 region; it reads NKAD. A G5 region spans residues 174-176; sequence SAR.

This sequence belongs to the TRAFAC class translation factor GTPase superfamily. Classic translation factor GTPase family. EF-Tu/EF-1A subfamily. As to quaternary structure, monomer.

The protein resides in the cytoplasm. It catalyses the reaction GTP + H2O = GDP + phosphate + H(+). Functionally, GTP hydrolase that promotes the GTP-dependent binding of aminoacyl-tRNA to the A-site of ribosomes during protein biosynthesis. This chain is Elongation factor Tu, found in Pseudomonas entomophila (strain L48).